A 614-amino-acid polypeptide reads, in one-letter code: Zinc metalloproteinase-disintegrin-like protein H4 subunit A (614 aa).

The N-terminal stretch at 1–20 (MIQPLLVVTCLVVFPYQVSS) is a signal peptide. Residues 21-193 (IILESGNVND…RKASQLVATS (173 aa)) constitute a propeptide that is removed on maturation. A Pyrrolidone carboxylic acid (Glu) modification is found at E194. The Peptidase M12B domain occupies 201–397 (KYIELVIVVD…IKSKCIDNKP (197 aa)). N-linked (GlcNAc...) asparagine glycosylation occurs at N220. Disulfide bonds link C312–C392, C352–C376, C354–C359, C408–C437, C419–C432, C421–C427, C431–C454, C445–C451, C450–C476, C463–C483, C470–C502, C495–C507, C514–C564, C529–C575, C542–C552, C559–C601, and C595–C607. H337 lines the Zn(2+) pocket. The short motif at 337 to 348 (HELGHNLGMDHD) is the Metal-binding element. E338 serves as the catalytic Proton acceptor. Zn(2+) is bound by residues H341 and H347. The Disintegrin domain occupies 405–491 (PAFCGNYFVE…ECPTDVLQRN (87 aa)). Residues N410, F412, E414, E417, and D420 each coordinate Ca(2+). A glycan (N-linked (GlcNAc...) asparagine) is linked at N433. The D/ECD-tripeptide signature appears at 469 to 471 (ECD). Residues D471 and D486 each contribute to the Ca(2+) site.

It belongs to the venom metalloproteinase (M12B) family. P-III subfamily. Homodimer; disulfide-linked. Heterodimer of A and B subunits; disulfide-linked. The cofactor is Zn(2+). In terms of processing, N-glycosylated. Post-translationally, the N-terminus is blocked. As to expression, expressed by the venom gland (at protein level). Expressed by the venom gland.

It is found in the secreted. Its activity is regulated as follows. The proteolytic activity of the heterodimer of A and B subunits requires Zn(2+) and Ca(2+) ions. Functionally, heterodimer (A and B subunits): Zinc metalloprotease that has fibrinogenolytic and hemorrhagic activities. Cleaves insulin B chain preferably at '40-Tyr-|-Leu-41' bond, but also at '28-Gln-|-His-29' and '34-His-|-Leu-35' bonds. Hydrolyzes effectively isolated extracellular matrix (ECM) bovine fibronectin, and only slightly, basal membrane (BM) proteins human collagen IV and murine laminin, in vitro. Cleaves nidogen-1 (at '350-Ser-|-Phe-351' and '380-Tyr-|-Asn-381' bonds), but not laminin, in a solubilized BM preparation. Hydrolyzes plasma proteins involved in blood coagulation in vitro. It slightly shortens prothrombin time and significantly prolongs thrombin time. Has potent alpha-fibrinogenase activity cleaving human fibrinogen alpha chain at '441-Glu-|-Leu-442' and '539-Glu-|-Phe-540' bonds, and to a lesser extent, beta chain at '52-Lys-|-Arg-53' and '48-Pro-|-Leu-49' bonds, but does not cleave gamma chain. Hydrolyzes bovine prothrombin at '200-Ser-|-Gly-201' bond, but does not activate it, however, it cleaves fragment 1 and prethrombin 1 from it. Hydrolyzes bovine factor X heavy chain, but the cleavage does not produce an activated factor Xa heavy chain. No hydrolysis or activation of plasminogen. The ability to degrade some of the ECM, BM and plasma proteins is likely the main contributor to its hemorrhagic activity. Inhibits platelet aggregation induced by collagen in vitro. Its binding to glycosaminoglycans (GAGs) may assist in concentrating it in the proximity of blood vessel walls enabling in vivo degradation of BM protein components. Cytotoxic to cultured HeLa cancer cells in a concentration- and time-dependent manner. In the solubilized BM preparation (Matrigel), it induces morphological changes in the HeLa cells and inhibits their adhesion, however, the viability of the cells is not reduced. This chain is Zinc metalloproteinase-disintegrin-like protein H4 subunit A, found in Vipera ammodytes ammodytes (Western sand viper).